A 427-amino-acid chain; its full sequence is Serine--tRNA ligase (427 aa).

Residue 230–232 (TAE) coordinates L-serine. An ATP-binding site is contributed by 261-263 (RAE). Glu-284 provides a ligand contact to L-serine. An ATP-binding site is contributed by 348–351 (EISS). Ser-384 contributes to the L-serine binding site.

Belongs to the class-II aminoacyl-tRNA synthetase family. Type-1 seryl-tRNA synthetase subfamily. In terms of assembly, homodimer. The tRNA molecule binds across the dimer.

It localises to the cytoplasm. It carries out the reaction tRNA(Ser) + L-serine + ATP = L-seryl-tRNA(Ser) + AMP + diphosphate + H(+). The enzyme catalyses tRNA(Sec) + L-serine + ATP = L-seryl-tRNA(Sec) + AMP + diphosphate + H(+). It functions in the pathway aminoacyl-tRNA biosynthesis; selenocysteinyl-tRNA(Sec) biosynthesis; L-seryl-tRNA(Sec) from L-serine and tRNA(Sec): step 1/1. Its function is as follows. Catalyzes the attachment of serine to tRNA(Ser). Is also able to aminoacylate tRNA(Sec) with serine, to form the misacylated tRNA L-seryl-tRNA(Sec), which will be further converted into selenocysteinyl-tRNA(Sec). The chain is Serine--tRNA ligase from Syntrophomonas wolfei subsp. wolfei (strain DSM 2245B / Goettingen).